Consider the following 211-residue polypeptide: FMN-dependent NADH:quinone oxidoreductase 3 (211 aa).

Residue methionine 102 to phenylalanine 105 coordinates FMN.

The protein belongs to the azoreductase type 1 family. Homodimer. FMN is required as a cofactor.

The catalysed reaction is 2 a quinone + NADH + H(+) = 2 a 1,4-benzosemiquinone + NAD(+). It catalyses the reaction N,N-dimethyl-1,4-phenylenediamine + anthranilate + 2 NAD(+) = 2-(4-dimethylaminophenyl)diazenylbenzoate + 2 NADH + 2 H(+). Quinone reductase that provides resistance to thiol-specific stress caused by electrophilic quinones. In terms of biological role, also exhibits azoreductase activity. Catalyzes the reductive cleavage of the azo bond in aromatic azo compounds to the corresponding amines. The protein is FMN-dependent NADH:quinone oxidoreductase 3 of Bacillus cereus (strain ATCC 10987 / NRS 248).